The primary structure comprises 144 residues: Snake venom vascular endothelial growth factor toxin cratrin (144 aa).

The first 24 residues, 1–24 (MAVYLLAVAILFCIQGWPSGTVQG), serve as a signal peptide directing secretion. Glutamine 25 bears the Pyrrolidone carboxylic acid mark. Cystine bridges form between cysteine 38/cysteine 80, cysteine 69/cysteine 115, and cysteine 73/cysteine 117. The disordered stretch occupies residues 119–144 (PRSTVNNGKRKKNPKEGEPRAKFPLV). Positions 132–144 (PKEGEPRAKFPLV) are enriched in basic and acidic residues.

The protein belongs to the PDGF/VEGF growth factor family. Snake venom VEGF subfamily. Homodimer; disulfide-linked. Interacts with VEGF receptor-1 (FLT1) with a high affinity, whereas it binds to VEGF receptor-2 (KDR) with a low affinity. Does not bind VEGF receptor-3 (FLT4). As to expression, expressed by the venom gland.

It is found in the secreted. Functionally, snake venom VEGFs that may contribute to venom dispersion and prey subjugation by inducing vascular permeability and hypotension. This protein induces an increase in capillary permeability after intradermal injection, as well as a drastic hypotensive effect after intravenous injection. The hypotension is mediated by nitric oxide (NO), which is produced by VEGF-activated endothelium NO synthase. Also induces angiogenesis in vitro. Like other crotalid VEGFs, this protein interacts with VEGF receptor-1 (FLT1) with a high affinity, whereas it binds to VEGF receptor-2 (KDR) with a low affinity. The chain is Snake venom vascular endothelial growth factor toxin cratrin from Crotalus atrox (Western diamondback rattlesnake).